The sequence spans 122 residues: Ribosome-binding factor A (122 aa).

Belongs to the RbfA family. As to quaternary structure, monomer. Binds 30S ribosomal subunits, but not 50S ribosomal subunits or 70S ribosomes.

It localises to the cytoplasm. Functionally, one of several proteins that assist in the late maturation steps of the functional core of the 30S ribosomal subunit. Associates with free 30S ribosomal subunits (but not with 30S subunits that are part of 70S ribosomes or polysomes). Required for efficient processing of 16S rRNA. May interact with the 5'-terminal helix region of 16S rRNA. The sequence is that of Ribosome-binding factor A from Geotalea uraniireducens (strain Rf4) (Geobacter uraniireducens).